The following is a 194-amino-acid chain: Holliday junction branch migration complex subunit RuvA (194 aa).

The tract at residues 1-64 is domain I; sequence MISSLNGILE…EDALSLFGFA (64 aa). The domain II stretch occupies residues 65–143; it reads TTEELSLFET…KNWEAGVLSQ (79 aa). The segment at 144–149 is flexible linker; sequence VTEANS. The segment at 149–194 is domain III; sequence SDILATLTALGYSSSEAAKAISSLGDNGDLPLEERIKLALNYFNNK.

This sequence belongs to the RuvA family. In terms of assembly, homotetramer. Forms an RuvA(8)-RuvB(12)-Holliday junction (HJ) complex. HJ DNA is sandwiched between 2 RuvA tetramers; dsDNA enters through RuvA and exits via RuvB. An RuvB hexamer assembles on each DNA strand where it exits the tetramer. Each RuvB hexamer is contacted by two RuvA subunits (via domain III) on 2 adjacent RuvB subunits; this complex drives branch migration. In the full resolvosome a probable DNA-RuvA(4)-RuvB(12)-RuvC(2) complex forms which resolves the HJ.

It is found in the cytoplasm. Functionally, the RuvA-RuvB-RuvC complex processes Holliday junction (HJ) DNA during genetic recombination and DNA repair, while the RuvA-RuvB complex plays an important role in the rescue of blocked DNA replication forks via replication fork reversal (RFR). RuvA specifically binds to HJ cruciform DNA, conferring on it an open structure. The RuvB hexamer acts as an ATP-dependent pump, pulling dsDNA into and through the RuvAB complex. HJ branch migration allows RuvC to scan DNA until it finds its consensus sequence, where it cleaves and resolves the cruciform DNA. This chain is Holliday junction branch migration complex subunit RuvA, found in Dehalococcoides mccartyi (strain CBDB1).